Here is a 473-residue protein sequence, read N- to C-terminus: Hyaluronidase-2 (473 aa).

A signal peptide spans 1-20; that stretch reads MRAGLGPIITLALVLEVAWA. Disulfide bonds link Cys47/Cys340 and Cys211/Cys227. Asn74 and Asn103 each carry an N-linked (GlcNAc...) asparagine glycan. Glu135 acts as the Proton donor in catalysis. Asn357 carries an N-linked (GlcNAc...) asparagine glycan. The EGF-like domain occupies 361–439; it reads ATQYCSWTQC…YLGWGGEQCQ (79 aa). 3 disulfide bridges follow: Cys365–Cys376, Cys370–Cys427, and Cys429–Cys438. Asp448 carries GPI-anchor amidated aspartate lipidation. The propeptide at 449-473 is removed in mature form; that stretch reads ASRAWAGAHLASLLGLVAMTLTWTL.

Belongs to the glycosyl hydrolase 56 family. As to quaternary structure, interacts with MST1R.

It localises to the cell membrane. The enzyme catalyses Random hydrolysis of (1-&gt;4)-linkages between N-acetyl-beta-D-glucosamine and D-glucuronate residues in hyaluronate.. Its function is as follows. Catalyzes hyaluronan degradation into small fragments that are endocytosed and degraded in lysosomes by HYAL1 and exoglycosidases. Essential for the breakdown of extracellular matrix hyaluronan. The polypeptide is Hyaluronidase-2 (Hyal2) (Rattus norvegicus (Rat)).